The chain runs to 703 residues: Protein teflon (703 aa).

The segment at 32–55 (MFCHFCKDIFTHLPEFMRHLQWSH) adopts a C2H2-type 1 zinc-finger fold. Disordered stretches follow at residues 78 to 111 (TSED…PGSS), 138 to 161 (SHEQ…ARKP), and 339 to 434 (SQQP…SKLE). Polar residues-rich tracts occupy residues 84–94 (QSQANSCSSGD) and 138–147 (SHEQSYSKTP). Positions 148–161 (PDSRTEGFRCARKP) are enriched in basic and acidic residues. 2 stretches are compositionally biased toward polar residues: residues 339-352 (SQQP…NNAV) and 364-373 (SLTVISSSPI). 2 consecutive C2H2-type zinc fingers follow at residues 649–672 (YFCE…QSVH) and 677–700 (FTCS…KTVH).

This sequence belongs to the Teflon family.

Its subcellular location is the nucleus. The protein localises to the chromosome. Functionally, specifically required in males for proper segregation of autosomal bivalents at meiosis I. Expression is required in the male germ line prior to spermatocyte stage S4. May have a role as a bridging molecule maintaining adhesion to hold autosome bivalents together via heterochromatic connections. The polypeptide is Protein teflon (Drosophila pseudoobscura pseudoobscura (Fruit fly)).